The following is a 276-amino-acid chain: A-factor receptor protein (276 aa).

Positions 8–68 (VQTWRSIVDA…AIMDEQTSTV (61 aa)) constitute an HTH tetR-type domain. The segment at residues 31–50 (AISEILRRAKVTKGALYFHF) is a DNA-binding region (H-T-H motif). Positions 207 to 220 (EKAEREEQEARIAA) are enriched in basic and acidic residues. The tract at residues 207–276 (EKAEREEQEA…AGVAAGGVVA (70 aa)) is disordered. The segment covering 221-235 (EAKGAGSDAATDSGS) has biased composition (low complexity). The segment covering 236–257 (RSGGSGLRGGGSGRGPRAGGAG) has biased composition (gly residues).

In terms of assembly, homodimer or multimer. Binds to both DNA and A-factor as a homodimer.

It localises to the cytoplasm. Functionally, represses adpA expression by binding to the promoter region in the absence of A-factor, causing repression of streptomycin production and of sporulation. This Streptomyces griseus protein is A-factor receptor protein (arpA).